A 92-amino-acid polypeptide reads, in one-letter code: UPF0473 protein OB2006 (92 aa).

The protein belongs to the UPF0473 family.

The sequence is that of UPF0473 protein OB2006 from Oceanobacillus iheyensis (strain DSM 14371 / CIP 107618 / JCM 11309 / KCTC 3954 / HTE831).